A 252-amino-acid chain; its full sequence is Imidazole glycerol phosphate synthase subunit HisF (252 aa).

Active-site residues include D11 and D130.

Belongs to the HisA/HisF family. As to quaternary structure, heterodimer of HisH and HisF.

It localises to the cytoplasm. It catalyses the reaction 5-[(5-phospho-1-deoxy-D-ribulos-1-ylimino)methylamino]-1-(5-phospho-beta-D-ribosyl)imidazole-4-carboxamide + L-glutamine = D-erythro-1-(imidazol-4-yl)glycerol 3-phosphate + 5-amino-1-(5-phospho-beta-D-ribosyl)imidazole-4-carboxamide + L-glutamate + H(+). Its pathway is amino-acid biosynthesis; L-histidine biosynthesis; L-histidine from 5-phospho-alpha-D-ribose 1-diphosphate: step 5/9. Functionally, IGPS catalyzes the conversion of PRFAR and glutamine to IGP, AICAR and glutamate. The HisF subunit catalyzes the cyclization activity that produces IGP and AICAR from PRFAR using the ammonia provided by the HisH subunit. The chain is Imidazole glycerol phosphate synthase subunit HisF from Thermococcus onnurineus (strain NA1).